Reading from the N-terminus, the 155-residue chain is MNPLIDVRVQRLPHSDGLPLPRYETSGAAGMDLIAALPEGEPMVLAPGERAMVPTGLAIALPQGFEAQVRPRSGLAAKNGVTVLNSPGTVDCDYRGEVKVILINHGADAFTIERGTRIAQMVVSPVTQARFEEVETLDETARGAGGFGSTGTKGR.

Residues 72 to 74 (RSG), N85, 89 to 91 (TVD), and K99 contribute to the substrate site.

Belongs to the dUTPase family. Mg(2+) serves as cofactor.

It catalyses the reaction dUTP + H2O = dUMP + diphosphate + H(+). It functions in the pathway pyrimidine metabolism; dUMP biosynthesis; dUMP from dCTP (dUTP route): step 2/2. Its function is as follows. This enzyme is involved in nucleotide metabolism: it produces dUMP, the immediate precursor of thymidine nucleotides and it decreases the intracellular concentration of dUTP so that uracil cannot be incorporated into DNA. The sequence is that of Deoxyuridine 5'-triphosphate nucleotidohydrolase from Parvibaculum lavamentivorans (strain DS-1 / DSM 13023 / NCIMB 13966).